The sequence spans 123 residues: Holo-[acyl-carrier-protein] synthase (123 aa).

The Mg(2+) site is built by aspartate 8 and glutamate 56.

Belongs to the P-Pant transferase superfamily. AcpS family. Mg(2+) is required as a cofactor.

It localises to the cytoplasm. It catalyses the reaction apo-[ACP] + CoA = holo-[ACP] + adenosine 3',5'-bisphosphate + H(+). Functionally, transfers the 4'-phosphopantetheine moiety from coenzyme A to a Ser of acyl-carrier-protein. The polypeptide is Holo-[acyl-carrier-protein] synthase (Treponema denticola (strain ATCC 35405 / DSM 14222 / CIP 103919 / JCM 8153 / KCTC 15104)).